The following is a 389-amino-acid chain: Chalcone synthase 4 (389 aa).

Cysteine 164 is an active-site residue.

It belongs to the thiolase-like superfamily. Chalcone/stilbene synthases family.

The catalysed reaction is (E)-4-coumaroyl-CoA + 3 malonyl-CoA + 3 H(+) = 2',4,4',6'-tetrahydroxychalcone + 3 CO2 + 4 CoA. Its pathway is secondary metabolite biosynthesis; flavonoid biosynthesis. The primary product of this enzyme is 4,2',4',6'-tetrahydroxychalcone (also termed naringenin-chalcone or chalcone) which can under specific conditions spontaneously isomerize into naringenin. In Pisum sativum (Garden pea), this protein is Chalcone synthase 4 (CHS4).